We begin with the raw amino-acid sequence, 447 residues long: Dihydroorotase (447 aa).

The Zn(2+) site is built by histidine 81 and histidine 83. Residues 83-85 (HFR) and asparagine 115 contribute to the substrate site. Positions 171, 198, and 252 each coordinate Zn(2+). Asparagine 298 is a substrate binding site. Aspartate 325 provides a ligand contact to Zn(2+). Aspartate 325 is a catalytic residue. Substrate contacts are provided by residues histidine 329 and 343 to 344 (FG).

Belongs to the metallo-dependent hydrolases superfamily. DHOase family. Class I DHOase subfamily. Requires Zn(2+) as cofactor.

It catalyses the reaction (S)-dihydroorotate + H2O = N-carbamoyl-L-aspartate + H(+). It participates in pyrimidine metabolism; UMP biosynthesis via de novo pathway; (S)-dihydroorotate from bicarbonate: step 3/3. Its function is as follows. Catalyzes the reversible cyclization of carbamoyl aspartate to dihydroorotate. The sequence is that of Dihydroorotase from Ehrlichia canis (strain Jake).